We begin with the raw amino-acid sequence, 59 residues long: Large ribosomal subunit protein uL30 (59 aa).

This sequence belongs to the universal ribosomal protein uL30 family. As to quaternary structure, part of the 50S ribosomal subunit.

This Pectobacterium atrosepticum (strain SCRI 1043 / ATCC BAA-672) (Erwinia carotovora subsp. atroseptica) protein is Large ribosomal subunit protein uL30.